A 510-amino-acid polypeptide reads, in one-letter code: Bifunctional pantoate ligase/cytidylate kinase (510 aa).

The tract at residues 1 to 276 (MKKVIIRKTE…CGETRLIDHV (276 aa)) is pantoate--beta-alanine ligase. Residue 29 to 36 (MGNLHNGH) participates in ATP binding. H36 acts as the Proton donor in catalysis. A (R)-pantoate-binding site is contributed by Q61. A beta-alanine-binding site is contributed by Q61. Residue 150-153 (GEKD) coordinates ATP. Residue Q156 participates in (R)-pantoate binding. 187 to 190 (LSSR) contributes to the ATP binding site. Positions 277-510 (FLMKRSPIIA…DKIPKETQIR (234 aa)) are cytidylate kinase.

The protein in the N-terminal section; belongs to the pantothenate synthetase family. In the C-terminal section; belongs to the cytidylate kinase family. Type 1 subfamily.

It localises to the cytoplasm. The catalysed reaction is (R)-pantoate + beta-alanine + ATP = (R)-pantothenate + AMP + diphosphate + H(+). It catalyses the reaction CMP + ATP = CDP + ADP. The enzyme catalyses dCMP + ATP = dCDP + ADP. Its pathway is cofactor biosynthesis; (R)-pantothenate biosynthesis; (R)-pantothenate from (R)-pantoate and beta-alanine: step 1/1. Its function is as follows. Catalyzes the condensation of pantoate with beta-alanine in an ATP-dependent reaction via a pantoyl-adenylate intermediate. In terms of biological role, catalyzes the transfer of a phosphate group from ATP to either CMP or dCMP to form CDP or dCDP and ADP, respectively. The chain is Bifunctional pantoate ligase/cytidylate kinase from Prochlorococcus marinus (strain MIT 9312).